Reading from the N-terminus, the 199-residue chain is Dephospho-CoA kinase (199 aa).

The 197-residue stretch at 3–199 (ILGLTGSIGM…ATAKMPQRRA (197 aa)) folds into the DPCK domain. 11 to 16 (GMGKST) serves as a coordination point for ATP.

This sequence belongs to the CoaE family.

The protein localises to the cytoplasm. It carries out the reaction 3'-dephospho-CoA + ATP = ADP + CoA + H(+). Its pathway is cofactor biosynthesis; coenzyme A biosynthesis; CoA from (R)-pantothenate: step 5/5. In terms of biological role, catalyzes the phosphorylation of the 3'-hydroxyl group of dephosphocoenzyme A to form coenzyme A. The chain is Dephospho-CoA kinase from Rhodopseudomonas palustris (strain BisB18).